Consider the following 158-residue polypeptide: MFMSSIIELVTAAITPAIQTPYELVDVEYGKMGGDYVLSIFVDKEGGISLQDTADLSEKISPILDTIKPDPFPDQYMLEVTSPGLERPLKTADAVEKAVGKYIHVKLYQAIDKLKVFEGTLLSFDGTDLIMEYMDKTRKKEVTIPYQTVAKARLAVKL.

This sequence belongs to the RimP family.

The protein resides in the cytoplasm. In terms of biological role, required for maturation of 30S ribosomal subunits. This is Ribosome maturation factor RimP from Streptococcus suis (strain 05ZYH33).